Reading from the N-terminus, the 476-residue chain is Ribosomal protein uS12 methylthiotransferase RimO (476 aa).

The MTTase N-terminal domain maps to 33 to 143; it reads NRIGFVSLGC…VLKHVHKYVP (111 aa). Positions 42, 78, 107, 175, 179, and 182 each coordinate [4Fe-4S] cluster. One can recognise a Radical SAM core domain in the interval 161–398; it reads LTPKHYAYLK…MEVQAEISAE (238 aa). The TRAM domain occupies 401–467; that stretch reads ARFVGRTMDI…EHDLWAELVD (67 aa).

This sequence belongs to the methylthiotransferase family. RimO subfamily. It depends on [4Fe-4S] cluster as a cofactor.

The protein localises to the cytoplasm. The enzyme catalyses L-aspartate(89)-[ribosomal protein uS12]-hydrogen + (sulfur carrier)-SH + AH2 + 2 S-adenosyl-L-methionine = 3-methylsulfanyl-L-aspartate(89)-[ribosomal protein uS12]-hydrogen + (sulfur carrier)-H + 5'-deoxyadenosine + L-methionine + A + S-adenosyl-L-homocysteine + 2 H(+). In terms of biological role, catalyzes the methylthiolation of an aspartic acid residue of ribosomal protein uS12. This chain is Ribosomal protein uS12 methylthiotransferase RimO, found in Shewanella sp. (strain MR-4).